A 432-amino-acid polypeptide reads, in one-letter code: Glutamyl-tRNA reductase (432 aa).

Substrate-binding positions include 49–52 (TCNR), Ser101, 106–108 (EPQ), and Gln112. Cys50 serves as the catalytic Nucleophile. 181 to 186 (GAGETI) is a binding site for NADP(+). The tract at residues 407–432 (FPEKPGYQHPPIATPIVRTDDADPAP) is disordered.

It belongs to the glutamyl-tRNA reductase family. As to quaternary structure, homodimer.

It catalyses the reaction (S)-4-amino-5-oxopentanoate + tRNA(Glu) + NADP(+) = L-glutamyl-tRNA(Glu) + NADPH + H(+). The protein operates within porphyrin-containing compound metabolism; protoporphyrin-IX biosynthesis; 5-aminolevulinate from L-glutamyl-tRNA(Glu): step 1/2. Its function is as follows. Catalyzes the NADPH-dependent reduction of glutamyl-tRNA(Glu) to glutamate 1-semialdehyde (GSA). This chain is Glutamyl-tRNA reductase, found in Xanthomonas oryzae pv. oryzae (strain MAFF 311018).